A 548-amino-acid polypeptide reads, in one-letter code: Beta-lactamase-like protein 2 (548 aa).

Positions 1 to 24 are cleaved as a signal peptide; sequence MKIMNKQSITIFLIICFLINLILS. Residues asparagine 237, asparagine 258, asparagine 443, and asparagine 459 are each glycosylated (N-linked (GlcNAc...) asparagine).

It belongs to the beta-lactamase family.

Its subcellular location is the secreted. In Dictyostelium discoideum (Social amoeba), this protein is Beta-lactamase-like protein 2.